A 374-amino-acid polypeptide reads, in one-letter code: CMP-N-acetylneuraminate-beta-1,4-galactoside alpha-2,3-sialyltransferase (374 aa).

Topologically, residues 1–8 are cytoplasmic; the sequence is MGLLVFVR. Residues 9-28 form a helical; Signal-anchor for type II membrane protein membrane-spanning segment; it reads NLLLALCLFLVLGFLYYSAW. Over 29–374 the chain is Lumenal; the sequence is KLHLLQWEDS…RVITDLSSGI (346 aa). Residues N79 and N170 are each glycosylated (N-linked (GlcNAc...) asparagine). A disulfide bridge links C159 with C313.

The protein belongs to the glycosyltransferase 29 family. Found in all tissues tested. High expression found in brain, liver, kidney, colon, heart and spleen.

Its subcellular location is the membrane. The protein localises to the golgi apparatus. The protein resides in the golgi stack membrane. The enzyme catalyses a beta-D-galactosyl-(1-&gt;4)-N-acetyl-beta-D-glucosaminyl derivative + CMP-N-acetyl-beta-neuraminate = an N-acetyl-alpha-neuraminyl-(2-&gt;3)-beta-D-galactosyl-(1-&gt;4)-N-acetyl-beta-D-glucosaminyl derivative + CMP + H(+). Its pathway is protein modification; protein glycosylation. Catalyzes the formation of the NeuAc-alpha-2,3-Gal-beta-1,4-GlcNAc-, NeuAc-alpha-2,3-Gal-beta-1,3-GlcNAc- and NeuAc-alpha-2,3-Gal-beta-1,3-GalNAc- sequences found in terminal carbohydrate groups of glycoproteins and glycolipids. The highest activity is toward Gal-beta-1,3-GlcNAc and the lowest toward Gal-beta-1,3-GalNAc. This is CMP-N-acetylneuraminate-beta-1,4-galactoside alpha-2,3-sialyltransferase (St3gal3) from Mus musculus (Mouse).